The following is a 449-amino-acid chain: Jacalin-related lectin 20 (449 aa).

Disordered stretches follow at residues Met1–Ala20 and Ala294–Gly314. At Ala2 the chain carries N-acetylalanine. 3 Jacalin-type lectin domains span residues Ala2–Pro144, Pro147–Ala294, and Thr303–Pro446.

Belongs to the jacalin lectin family.

This Arabidopsis thaliana (Mouse-ear cress) protein is Jacalin-related lectin 20 (JAL20).